The sequence spans 262 residues: Phosphatidylserine decarboxylase proenzyme (262 aa).

Active-site charge relay system; for autoendoproteolytic cleavage activity residues include aspartate 86, histidine 142, and serine 226. The active-site Schiff-base intermediate with substrate; via pyruvic acid; for decarboxylase activity is the serine 226. Residue serine 226 is modified to Pyruvic acid (Ser); by autocatalysis.

It belongs to the phosphatidylserine decarboxylase family. PSD-B subfamily. Prokaryotic type I sub-subfamily. As to quaternary structure, heterodimer of a large membrane-associated beta subunit and a small pyruvoyl-containing alpha subunit. The cofactor is pyruvate. Is synthesized initially as an inactive proenzyme. Formation of the active enzyme involves a self-maturation process in which the active site pyruvoyl group is generated from an internal serine residue via an autocatalytic post-translational modification. Two non-identical subunits are generated from the proenzyme in this reaction, and the pyruvate is formed at the N-terminus of the alpha chain, which is derived from the carboxyl end of the proenzyme. The autoendoproteolytic cleavage occurs by a canonical serine protease mechanism, in which the side chain hydroxyl group of the serine supplies its oxygen atom to form the C-terminus of the beta chain, while the remainder of the serine residue undergoes an oxidative deamination to produce ammonia and the pyruvoyl prosthetic group on the alpha chain. During this reaction, the Ser that is part of the protease active site of the proenzyme becomes the pyruvoyl prosthetic group, which constitutes an essential element of the active site of the mature decarboxylase.

It localises to the cell membrane. It carries out the reaction a 1,2-diacyl-sn-glycero-3-phospho-L-serine + H(+) = a 1,2-diacyl-sn-glycero-3-phosphoethanolamine + CO2. Its pathway is phospholipid metabolism; phosphatidylethanolamine biosynthesis; phosphatidylethanolamine from CDP-diacylglycerol: step 2/2. Its function is as follows. Catalyzes the formation of phosphatidylethanolamine (PtdEtn) from phosphatidylserine (PtdSer). The polypeptide is Phosphatidylserine decarboxylase proenzyme (Bacillus cereus (strain ATCC 10987 / NRS 248)).